A 464-amino-acid chain; its full sequence is ATP synthase subunit beta (464 aa).

152-159 (GGAGVGKS) serves as a coordination point for ATP.

This sequence belongs to the ATPase alpha/beta chains family. F-type ATPases have 2 components, CF(1) - the catalytic core - and CF(0) - the membrane proton channel. CF(1) has five subunits: alpha(3), beta(3), gamma(1), delta(1), epsilon(1). CF(0) has three main subunits: a(1), b(2) and c(9-12). The alpha and beta chains form an alternating ring which encloses part of the gamma chain. CF(1) is attached to CF(0) by a central stalk formed by the gamma and epsilon chains, while a peripheral stalk is formed by the delta and b chains.

Its subcellular location is the cell membrane. It catalyses the reaction ATP + H2O + 4 H(+)(in) = ADP + phosphate + 5 H(+)(out). In terms of biological role, produces ATP from ADP in the presence of a proton gradient across the membrane. The catalytic sites are hosted primarily by the beta subunits. This Protochlamydia amoebophila (strain UWE25) protein is ATP synthase subunit beta.